Here is a 207-residue protein sequence, read N- to C-terminus: Outer-membrane lipoprotein LolB (207 aa).

An N-terminal signal peptide occupies residues 1–21 (MPTKTVRCLRLLPLASLLLAA). The N-palmitoyl cysteine moiety is linked to residue C22. C22 is lipidated: S-diacylglycerol cysteine.

It belongs to the LolB family. In terms of assembly, monomer.

The protein resides in the cell outer membrane. Its function is as follows. Plays a critical role in the incorporation of lipoproteins in the outer membrane after they are released by the LolA protein. The chain is Outer-membrane lipoprotein LolB from Pectobacterium atrosepticum (strain SCRI 1043 / ATCC BAA-672) (Erwinia carotovora subsp. atroseptica).